A 435-amino-acid chain; its full sequence is Glutamyl-tRNA reductase (435 aa).

Residues 49-52, Ser-109, 114-116, and Gln-120 contribute to the substrate site; these read TCNR and ETQ. The active-site Nucleophile is the Cys-50. 189-194 contacts NADP(+); sequence GAGEMS.

It belongs to the glutamyl-tRNA reductase family. Homodimer.

It carries out the reaction (S)-4-amino-5-oxopentanoate + tRNA(Glu) + NADP(+) = L-glutamyl-tRNA(Glu) + NADPH + H(+). It participates in porphyrin-containing compound metabolism; protoporphyrin-IX biosynthesis; 5-aminolevulinate from L-glutamyl-tRNA(Glu): step 1/2. Catalyzes the NADPH-dependent reduction of glutamyl-tRNA(Glu) to glutamate 1-semialdehyde (GSA). The polypeptide is Glutamyl-tRNA reductase (Listeria monocytogenes serovar 1/2a (strain ATCC BAA-679 / EGD-e)).